A 455-amino-acid chain; its full sequence is Adenylosuccinate synthetase isozyme 2 (455 aa).

The segment at 1 to 25 (MSDSGDAQPQDGGNSSSSRGKSPSV) is disordered. A compositionally biased stretch (low complexity) spans 12–25 (GGNSSSSRGKSPSV). Residues 38–44 (GDEGKGK) and 66–68 (GHT) each bind GTP. Aspartate 39 serves as the catalytic Proton acceptor. Residues aspartate 39 and glycine 66 each coordinate Mg(2+). Substrate is bound at residue aspartate 39. Residues 39–42 (DEGK), 64–67 (NAGH), threonine 161, arginine 175, asparagine 254, threonine 269, and arginine 333 contribute to the IMP site. Histidine 67 functions as the Proton donor in the catalytic mechanism. 329-335 (VTTGRKR) contacts substrate. GTP contacts are provided by residues arginine 335, 361-363 (KLD), and 443-446 (GVGK).

The protein belongs to the adenylosuccinate synthetase family. Homodimer. Mg(2+) is required as a cofactor.

Its subcellular location is the cytoplasm. It is found in the mitochondrion. It catalyses the reaction IMP + L-aspartate + GTP = N(6)-(1,2-dicarboxyethyl)-AMP + GDP + phosphate + 2 H(+). It participates in purine metabolism; AMP biosynthesis via de novo pathway; AMP from IMP: step 1/2. Its activity is regulated as follows. Inhibited competitively by AMP and IMP and non-competitively by fructose 1,6-bisphosphate. In terms of biological role, plays an important role in the de novo pathway and in the salvage pathway of purine nucleotide biosynthesis. Catalyzes the first committed step in the biosynthesis of AMP from IMP. This is Adenylosuccinate synthetase isozyme 2 (adss2) from Danio rerio (Zebrafish).